The chain runs to 879 residues: Alanine--tRNA ligase (879 aa).

Residues H564, H568, C666, and H670 each coordinate Zn(2+).

Belongs to the class-II aminoacyl-tRNA synthetase family. Zn(2+) serves as cofactor.

The protein resides in the cytoplasm. The enzyme catalyses tRNA(Ala) + L-alanine + ATP = L-alanyl-tRNA(Ala) + AMP + diphosphate. Catalyzes the attachment of alanine to tRNA(Ala) in a two-step reaction: alanine is first activated by ATP to form Ala-AMP and then transferred to the acceptor end of tRNA(Ala). Also edits incorrectly charged Ser-tRNA(Ala) and Gly-tRNA(Ala) via its editing domain. The chain is Alanine--tRNA ligase from Crocosphaera subtropica (strain ATCC 51142 / BH68) (Cyanothece sp. (strain ATCC 51142)).